The following is a 518-amino-acid chain: Reduced folate transporter (518 aa).

Residue Met1 is modified to N-acetylmethionine. Residues 1–29 lie on the Cytoplasmic side of the membrane; sequence MVPTGQVAEKQACEEPRQDRELKSWRCLV. A helical membrane pass occupies residues 30–50; that stretch reads FYLCFFGFMAQLRPGESFITP. 2 residues coordinate folate: Ile48 and Thr49. Over 51–62 the chain is Extracellular; sequence YLLQQNFTIEQV. An N-linked (GlcNAc...) asparagine glycan is attached at Asn56. Residues 63 to 85 form a helical membrane-spanning segment; the sequence is TNEIIPVLPYSHLAVLVPIFLLT. Topologically, residues 86–89 are cytoplasmic; that stretch reads DYLR. A helical membrane pass occupies residues 90 to 110; the sequence is YKPILILQCLSFMCVWLLLLL. Residues 111–114 lie on the Extracellular side of the membrane; that stretch reads GTSV. Residues 115–137 traverse the membrane as a helical segment; the sequence is VHMQLMEVFYSVTMAARIAYSSY. Folate contacts are provided by Glu121 and Arg131. The Cytoplasmic portion of the chain corresponds to 138 to 151; sequence IFSLVRPSRYQRMA. Residues 152 to 176 form a helical membrane-spanning segment; it reads SYSRAAVLLGVFTSSVLGQVLWPLE. Residue Val162 participates in folate binding. Residues 177 to 181 lie on the Extracellular side of the membrane; that stretch reads QKSQN. A helical membrane pass occupies residues 182-200; the sequence is SNMLNYISLGFIIFSLGLS. At 201–266 the chain is on the cytoplasmic side; that stretch reads LFLKRPKHSL…LSELVGNLRQ (66 aa). Residues 267–292 traverse the membrane as a helical segment; the sequence is PQLRLWCLWWVFNSAGYYLIVYYVHV. Residues Ala281, Gly282, and Ile286 each contribute to the folate site. The Extracellular segment spans residues 293-300; that stretch reads LWSIDKNL. Residues 301–323 traverse the membrane as a helical segment; it reads NYNGAVDAASTLLSAITSFSAGF. At 324-329 the chain is on the cytoplasmic side; it reads VKIRWA. The helical transmembrane segment at 330–350 threads the bilayer; it reads LWSKLVIASVIAIQAGLVFCM. At 351 to 353 the chain is on the extracellular side; the sequence is YMV. The chain crosses the membrane as a helical span at residues 354 to 377; the sequence is HYVTWVHKIWVLYMTYVLFRGAYQ. Positions 366 and 370 each coordinate folate. The Cytoplasmic portion of the chain corresponds to 378–391; the sequence is FLVPIATFQIASSL. Residues 392 to 415 traverse the membrane as a helical segment; that stretch reads SKELCALVFGINTFLATALKTAIT. The required for substrate-binding stretch occupies residues 407–419; it reads ATALKTAITLVVS. Over 416-423 the chain is Extracellular; sequence LVVSDKRG. A helical membrane pass occupies residues 424–448; that stretch reads LGLKVEKQFCIYSVYFMVLSVICFV. The Cytoplasmic portion of the chain corresponds to 449–512; sequence GAVLDGVRYC…DGVEDSEASL (64 aa). 3 positions are modified to phosphoserine: Ser473, Ser478, and Ser483. The tract at residues 480-518 is disordered; that stretch reads QVPSMQDGGLGGLQPSAPQLLPEDGVEDSEASLRAEAKA.

Belongs to the reduced folate carrier (RFC) transporter (TC 2.A.48) family.

The protein localises to the cell membrane. It localises to the apical cell membrane. The protein resides in the basolateral cell membrane. The enzyme catalyses 5-amino-1-(5-phospho-beta-D-ribosyl)imidazole-4-carboxamide(in) + (6S)-5-methyl-5,6,7,8-tetrahydrofolate(out) = 5-amino-1-(5-phospho-beta-D-ribosyl)imidazole-4-carboxamide(out) + (6S)-5-methyl-5,6,7,8-tetrahydrofolate(in). In terms of biological role, antiporter that mediates the import of reduced folates, driven by the export of organic anions. Also acts as an importer of immunoreactive cyclic dinucleotides, but with a lower transporter activity. Mechanistically, acts as a secondary active transporter, which exports intracellular organic anions down their concentration gradients to facilitate the uptake of its substrates. Has high affinity for N5-methyltetrahydrofolate, the predominant circulating form of folate. Also mediates the import of antifolate drug methotrexate. 5-amino-4-imidazolecarboxamide riboside (AICAR), when phosphorylated to AICAR monophosphate, can serve as an organic anion for antiporter activity. In Cricetulus griseus (Chinese hamster), this protein is Reduced folate transporter.